Consider the following 502-residue polypeptide: Probable mRNA-splicing protein ubp10 (502 aa).

The segment at 56 to 153 (SQNLYLDTIN…YVMRPTFTKL (98 aa)) adopts a UBP-type; degenerate zinc-finger fold. Zn(2+) contacts are provided by cysteine 89, cysteine 92, histidine 108, and histidine 114. Residues 178 to 501 (VGMNNIKNND…ESFIQLWERS (324 aa)) form the USP domain.

Belongs to the peptidase C19 family.

It localises to the nucleus. In terms of biological role, may play a role in mRNA splicing. It is unsure if the protein really exhibits hydrolase activity. Could be a competitor of ubiquitin C-terminal hydrolases (UCHs). This is Probable mRNA-splicing protein ubp10 (ubp10) from Schizosaccharomyces pombe (strain 972 / ATCC 24843) (Fission yeast).